The chain runs to 96 residues: MNIRPLHDRVIVKRLEVESTSAGGIVLTGSAAEKSTRGEILAVGNGRILENGTVKPLDVKVGDVVIFNEGYGVKKEKIDGQEVLILSEADLMAVVG.

Belongs to the GroES chaperonin family. In terms of assembly, heptamer of 7 subunits arranged in a ring. Interacts with the chaperonin GroEL.

It localises to the cytoplasm. Functionally, together with the chaperonin GroEL, plays an essential role in assisting protein folding. The GroEL-GroES system forms a nano-cage that allows encapsulation of the non-native substrate proteins and provides a physical environment optimized to promote and accelerate protein folding. GroES binds to the apical surface of the GroEL ring, thereby capping the opening of the GroEL channel. The sequence is that of Co-chaperonin GroES from Shewanella baltica (strain OS223).